The following is a 262-amino-acid chain: Apolipoprotein A-Ia (262 aa).

A signal peptide spans 1–18 (MKFVALALTLLLALGSQA). The tract at residues 32-63 (YKAAALVYLNQVKDQAEKALDNLDGTDYEQYK) is 3 X approximate tandem repeats. Repeat copies occupy residues 64–85 (LQLSESLTKLQEYAQTTSQALT) and 87–107 (YAETISTQLMENTKQLRERVM). Positions 64–262 (LQLSESLTKL…YETIAKAIQA (199 aa)) are 10 X approximate tandem repeats. The 3; half-length repeat unit spans residues 108 to 118 (TDVEDLRSKLE). 5 consecutive repeat copies span residues 119-140 (PHRAELYTALQKHIDEYREKLE), 141-162 (PVFQEYSALNRQNAEQLRAKLE), 163-184 (PLMDDIRKAFESNIEETKSKVV), 185-206 (PMVEAVRTKLTERLEDLRTMAA), and 207-228 (PYAEEYKEQLVKAVEEAREKIA). The 9; half-length repeat unit spans residues 229-239 (PHTQDLQTRME). Repeat 10 spans residues 240-262 (PYMENVRTTFAQMYETIAKAIQA).

This sequence belongs to the apolipoprotein A1/A4/E family. Homodimer. Interacts with naxe and yjefn3.

Its subcellular location is the secreted. Participates in the reverse transport of cholesterol from tissues to the liver for excretion by promoting cholesterol efflux from tissues and by acting as a cofactor for the lecithin cholesterol acyltransferase (LCAT). This is Apolipoprotein A-Ia from Danio rerio (Zebrafish).